A 321-amino-acid chain; its full sequence is Holliday junction branch migration complex subunit RuvB (321 aa).

The large ATPase domain (RuvB-L) stretch occupies residues 1–173 (MMMEQECVDD…FGIISRLEFY (173 aa)). ATP is bound by residues Ile12, Arg13, Gly54, Lys57, Thr58, Thr59, 120-122 (EDF), Arg163, Tyr173, and Arg210. Position 58 (Thr58) interacts with Mg(2+). Positions 174-244 (TPAELACIVK…LASDALARMD (71 aa)) are small ATPAse domain (RuvB-S). The tract at residues 247–321 (ELGLDQMDRK…KAYRHMNLLA (75 aa)) is head domain (RuvB-H). Positions 302 and 307 each coordinate DNA.

It belongs to the RuvB family. In terms of assembly, homohexamer. Forms an RuvA(8)-RuvB(12)-Holliday junction (HJ) complex. HJ DNA is sandwiched between 2 RuvA tetramers; dsDNA enters through RuvA and exits via RuvB. An RuvB hexamer assembles on each DNA strand where it exits the tetramer. Each RuvB hexamer is contacted by two RuvA subunits (via domain III) on 2 adjacent RuvB subunits; this complex drives branch migration. In the full resolvosome a probable DNA-RuvA(4)-RuvB(12)-RuvC(2) complex forms which resolves the HJ.

The protein localises to the cytoplasm. It catalyses the reaction ATP + H2O = ADP + phosphate + H(+). Its function is as follows. The RuvA-RuvB-RuvC complex processes Holliday junction (HJ) DNA during genetic recombination and DNA repair, while the RuvA-RuvB complex plays an important role in the rescue of blocked DNA replication forks via replication fork reversal (RFR). RuvA specifically binds to HJ cruciform DNA, conferring on it an open structure. The RuvB hexamer acts as an ATP-dependent pump, pulling dsDNA into and through the RuvAB complex. RuvB forms 2 homohexamers on either side of HJ DNA bound by 1 or 2 RuvA tetramers; 4 subunits per hexamer contact DNA at a time. Coordinated motions by a converter formed by DNA-disengaged RuvB subunits stimulates ATP hydrolysis and nucleotide exchange. Immobilization of the converter enables RuvB to convert the ATP-contained energy into a lever motion, pulling 2 nucleotides of DNA out of the RuvA tetramer per ATP hydrolyzed, thus driving DNA branch migration. The RuvB motors rotate together with the DNA substrate, which together with the progressing nucleotide cycle form the mechanistic basis for DNA recombination by continuous HJ branch migration. Branch migration allows RuvC to scan DNA until it finds its consensus sequence, where it cleaves and resolves cruciform DNA. This chain is Holliday junction branch migration complex subunit RuvB, found in Oleidesulfovibrio alaskensis (strain ATCC BAA-1058 / DSM 17464 / G20) (Desulfovibrio alaskensis).